We begin with the raw amino-acid sequence, 507 residues long: Phosphoprotein (507 aa).

Over residues 31-51 (EVSSLRDQTCNPGQENGTTGM) the composition is skewed to polar residues. Disordered regions lie at residues 31–86 (EVSS…CGER), 123–172 (IEDA…GYSF), and 242–307 (GIVA…DSEY). A compositionally biased stretch (acidic residues) spans 147 to 160 (SLDDSTEDSGEDYS). Serine 151 carries the post-translational modification Phosphoserine. Polar residues-rich tracts occupy residues 246–271 (GSTS…SAGN) and 289–300 (SGTQLPPRTSNE). The multimerization stretch occupies residues 304–376 (DSEYDDELFS…LSSIMIAIPG (73 aa)). Residues 310–339 (ELFSEIQEIRSAITKLTEDNQAILTKLDTL) adopt a coiled-coil conformation. An interaction with the nucleocapsid (N-RNA) region spans residues 459-507 (PSKAVLASLIRSSRVDQSHKHNMLALLKNIKGDDNLNEFYQMVKSITHA).

It belongs to the morbillivirus P protein family. Homotetramer. Interacts (via multimerization domain) with polymerase L; this interaction forms the polymerase L-P complex. Interacts (via N-terminus) with N0 (via Ncore); this interaction allows P to chaperon N0 to avoid N polymerization before encapsidation. Interacts (via C-terminus) with N-RNA template; this interaction positions the polymerase on the template for both transcription and replication. Post-translationally, phosphorylation on serines by host CK2 is necessary for the formation of viral factories.

In terms of biological role, essential cofactor of the RNA polymerase L that plays a central role in the transcription and replication by forming the polymerase complex with RNA polymerase L and recruiting L to the genomic N-RNA template for RNA synthesis. Also plays a central role in the encapsidation of nascent RNA chains by forming the encapsidation complex with the nucleocapsid protein N (N-P complex). Acts as a chaperone for newly synthesized free N protein, so-called N0, allowing encapsidation of nascent RNA chains during replication. The nucleoprotein protein N prevents excessive phosphorylation of P, which leads to down-regulation of viral transcription/ replication. Participates, together with N, in the formation of viral factories (viroplasms), which are large inclusions in the host cytoplasm where replication takes place. In Canine distemper virus (strain Onderstepoort) (CDV), this protein is Phosphoprotein (P/V).